The sequence spans 87 residues: MSNFSGFTKGTDIADLDAVAQTLKKPADDANKAVNDSIAALKDKPDNPALLADLQHSINKWSVIYNINSTIVRSMKDLMQGILQKFP.

Belongs to the SctF family. As to quaternary structure, the core secretion machinery of the T3SS is composed of approximately 20 different proteins, including cytoplasmic components, a base, an export apparatus and a needle. This subunit polymerizes and forms the helical needle filament. Forms high-order oligomers in vitro. Forms a stable ternary complex with the YscE-YscG chaperone. Interacts directly with YscG but makes very little direct contact with YscE. Interacts with the needle adapter protein YscI/SctI.

It is found in the secreted. The protein localises to the cell surface. Its activity is regulated as follows. The secretion and/or polymerization may be controlled by the type III secretion system regulator YopR. Interaction with YscE-YscG chaperone prevents premature polymerization of YscF/SctF in the bacterial cytosol and is required for its stability and efficient secretion. Interaction with the needle adapter protein YscI/SctI is required for YscF/SctF secretion, needle assembly and Yop secretion. The N-terminus varies among bacterial species, not only in amino acid composition but also in the number of amino acids, and may function in manipulating the host response to the advantage of the bacteria. In Y.pestis, the N-terminus can function to decrease cytokine induction, perhaps contributing to a favorable immune environment leading to survival of Y.pestis within the eukaryotic host. In terms of biological role, component of the type III secretion system (T3SS), also called injectisome, which is used to inject bacterial effector proteins into eukaryotic host cells. YscF/SctF forms the external needle filament that protrudes from the bacterial surface. Essential for the calcium-dependent regulation of T3SS and Yop secretion. Required to block Yop secretion in the presence of extracellular calcium. May be the extracellular T3SS component that senses extracellular calcium and/or participates in transmitting the calcium signal to the cytoplasmic compartment where the block in secretion is initiated. Its function is as follows. During infection, can induce innate immune responses. The needle proteins interact with host TLR2 or TLR4, and induce signaling by NF-kappa-B and/or AP-1. This activation is MyD88 dependent and results in increased expression of cytokines, including TNF-alpha, IL-6 and IL-8. Innate immune responses are modulated by the N-terminal region of YscF/SctF. The chain is Type 3 secretion system needle filament protein from Yersinia pestis.